The following is a 355-amino-acid chain: Guanine nucleotide-binding protein G(i) subunit alpha-2 (355 aa).

G2 carries the N-myristoyl glycine lipid modification. C3 is lipidated: S-palmitoyl cysteine. Positions 32–355 (REVKLLLLGA…KNNLKDCGLF (324 aa)) constitute a G-alpha domain. A G1 motif region spans residues 35 to 48 (KLLLLGAGESGKST). GTP is bound by residues 40–47 (GAGESGKS), 176–182 (LRTRVKT), 201–205 (DVGGQ), 270–273 (NKKD), and A327. 2 residues coordinate Mg(2+): S47 and T182. Residues 174–182 (DVLRTRVKT) are G2 motif. A G3 motif region spans residues 197 to 206 (FKMFDVGGQR). A G4 motif region spans residues 266–273 (ILFLNKKD). A G5 motif region spans residues 325 to 330 (TCATDT).

The protein belongs to the G-alpha family. G(i/o/t/z) subfamily. G proteins are composed of 3 units; alpha, beta and gamma. The alpha chain contains the guanine nucleotide binding site. In this context, interacts with GNB2. Interacts with UNC5B. Interacts with GPSM1. Interacts with RGS12 and RGS14. Interacts (inactive GDP-bound form) with NUCB1 (via GBA motif); the interaction leads to activation of GNAI3. Interacts (inactive GDP-bound form) with CCDC88C/DAPLE (via GBA motif). Interacts (inactive GDP-bound form) with CCDC8A/GIV (via GBA motif). Interacts with CXCR1 and CXCR2.

It localises to the cytoplasm. Its subcellular location is the cytoskeleton. The protein localises to the microtubule organizing center. The protein resides in the centrosome. It is found in the cell membrane. It localises to the membrane. In terms of biological role, guanine nucleotide-binding proteins (G proteins) are involved as modulators or transducers in various transmembrane signaling systems. The G(i) proteins are involved in hormonal regulation of adenylate cyclase: they inhibit the cyclase in response to beta-adrenergic stimuli. May play a role in cell division. This Mus musculus (Mouse) protein is Guanine nucleotide-binding protein G(i) subunit alpha-2 (Gnai2).